A 73-amino-acid chain; its full sequence is DNA-directed RNA polymerase subunit epsilon (73 aa).

Belongs to the RNA polymerase subunit epsilon family. In terms of assembly, RNAP is composed of a core of 2 alpha, a beta and a beta' subunit. The core is associated with a delta subunit, and at least one of epsilon or omega. When a sigma factor is associated with the core the holoenzyme is formed, which can initiate transcription.

It catalyses the reaction RNA(n) + a ribonucleoside 5'-triphosphate = RNA(n+1) + diphosphate. A non-essential component of RNA polymerase (RNAP). The polypeptide is DNA-directed RNA polymerase subunit epsilon (Lactobacillus acidophilus (strain ATCC 700396 / NCK56 / N2 / NCFM)).